We begin with the raw amino-acid sequence, 170 residues long: Ribosome maturation factor RimM (170 aa).

Residues 93–165 (PDEFHDHELI…RVVIDPPPGL (73 aa)) enclose the PRC barrel domain.

It belongs to the RimM family. As to quaternary structure, binds ribosomal protein uS19.

It localises to the cytoplasm. An accessory protein needed during the final step in the assembly of 30S ribosomal subunit, possibly for assembly of the head region. Essential for efficient processing of 16S rRNA. May be needed both before and after RbfA during the maturation of 16S rRNA. It has affinity for free ribosomal 30S subunits but not for 70S ribosomes. In Thermobifida fusca (strain YX), this protein is Ribosome maturation factor RimM.